Consider the following 426-residue polypeptide: Enolase (426 aa).

Gln-163 lines the (2R)-2-phosphoglycerate pocket. Glu-205 (proton donor) is an active-site residue. Mg(2+)-binding residues include Asp-242, Glu-286, and Asp-313. Lys-338, Arg-367, Ser-368, and Lys-389 together coordinate (2R)-2-phosphoglycerate. The active-site Proton acceptor is the Lys-338.

This sequence belongs to the enolase family. Mg(2+) is required as a cofactor.

Its subcellular location is the cytoplasm. The protein resides in the secreted. The protein localises to the cell surface. It catalyses the reaction (2R)-2-phosphoglycerate = phosphoenolpyruvate + H2O. It functions in the pathway carbohydrate degradation; glycolysis; pyruvate from D-glyceraldehyde 3-phosphate: step 4/5. Catalyzes the reversible conversion of 2-phosphoglycerate (2-PG) into phosphoenolpyruvate (PEP). It is essential for the degradation of carbohydrates via glycolysis. The polypeptide is Enolase (Helicobacter acinonychis (strain Sheeba)).